The sequence spans 224 residues: MKMDVKICGLKTAEAVEHAVSLGASHTGFIFFPKSPRNIEPDDAGRLAERIRGRAKIVAVTVDADNDDLDEIVSALKPDILQLHGGEDPERVLTVKAIYGLPVMKALSIREASDLDRIDPYLGIVDRFLFDAKPPAGSELPGGNGVSFDWRLLDALDGSVDYMLSGGLNAENIGEALALTGARAVDTSSGVESAPGVKDLKLMDAFFDAVRRAEAVRPRSGSKT.

Belongs to the TrpF family.

The enzyme catalyses N-(5-phospho-beta-D-ribosyl)anthranilate = 1-(2-carboxyphenylamino)-1-deoxy-D-ribulose 5-phosphate. It functions in the pathway amino-acid biosynthesis; L-tryptophan biosynthesis; L-tryptophan from chorismate: step 3/5. In Sinorhizobium fredii (strain NBRC 101917 / NGR234), this protein is N-(5'-phosphoribosyl)anthranilate isomerase.